A 232-amino-acid polypeptide reads, in one-letter code: Ribose-5-phosphate isomerase A (232 aa).

Residues 28–31 (TGST), 83–86 (DGAD), and 96–99 (KGGG) each bind substrate. Glutamate 105 (proton acceptor) is an active-site residue. Lysine 123 contacts substrate.

This sequence belongs to the ribose 5-phosphate isomerase family. Homodimer.

It carries out the reaction aldehydo-D-ribose 5-phosphate = D-ribulose 5-phosphate. It functions in the pathway carbohydrate degradation; pentose phosphate pathway; D-ribose 5-phosphate from D-ribulose 5-phosphate (non-oxidative stage): step 1/1. Catalyzes the reversible conversion of ribose-5-phosphate to ribulose 5-phosphate. The protein is Ribose-5-phosphate isomerase A of Rhodopseudomonas palustris (strain HaA2).